The primary structure comprises 498 residues: Glycerol kinase (498 aa).

Position 11 (Thr11) interacts with ADP. Residues Thr11, Ser12, and Ser13 each coordinate ATP. Sn-glycerol 3-phosphate is bound at residue Thr11. Arg15 provides a ligand contact to ADP. Sn-glycerol 3-phosphate is bound by residues Arg81, Glu82, Tyr133, and Asp242. Arg81, Glu82, Tyr133, Asp242, and Gln243 together coordinate glycerol. Thr264 and Gly307 together coordinate ADP. Residues Thr264, Gly307, Gln311, and Gly412 each coordinate ATP. ADP-binding residues include Gly412 and Asn416.

The protein belongs to the FGGY kinase family.

It catalyses the reaction glycerol + ATP = sn-glycerol 3-phosphate + ADP + H(+). It participates in polyol metabolism; glycerol degradation via glycerol kinase pathway; sn-glycerol 3-phosphate from glycerol: step 1/1. Its activity is regulated as follows. Inhibited by fructose 1,6-bisphosphate (FBP). Functionally, key enzyme in the regulation of glycerol uptake and metabolism. Catalyzes the phosphorylation of glycerol to yield sn-glycerol 3-phosphate. The protein is Glycerol kinase of Delftia acidovorans (strain DSM 14801 / SPH-1).